Reading from the N-terminus, the 156-residue chain is 6,7-dimethyl-8-ribityllumazine synthase (156 aa).

Residues Phe-23, 57–59 (AFE), and 81–83 (AVI) contribute to the 5-amino-6-(D-ribitylamino)uracil site. 86–87 (ST) lines the (2S)-2-hydroxy-3-oxobutyl phosphate pocket. His-89 (proton donor) is an active-site residue. Phe-114 serves as a coordination point for 5-amino-6-(D-ribitylamino)uracil. (2S)-2-hydroxy-3-oxobutyl phosphate is bound at residue Arg-128.

This sequence belongs to the DMRL synthase family.

The catalysed reaction is (2S)-2-hydroxy-3-oxobutyl phosphate + 5-amino-6-(D-ribitylamino)uracil = 6,7-dimethyl-8-(1-D-ribityl)lumazine + phosphate + 2 H2O + H(+). It participates in cofactor biosynthesis; riboflavin biosynthesis; riboflavin from 2-hydroxy-3-oxobutyl phosphate and 5-amino-6-(D-ribitylamino)uracil: step 1/2. Functionally, catalyzes the formation of 6,7-dimethyl-8-ribityllumazine by condensation of 5-amino-6-(D-ribitylamino)uracil with 3,4-dihydroxy-2-butanone 4-phosphate. This is the penultimate step in the biosynthesis of riboflavin. In Campylobacter curvus (strain 525.92), this protein is 6,7-dimethyl-8-ribityllumazine synthase.